We begin with the raw amino-acid sequence, 509 residues long: Maturase K (509 aa).

Belongs to the intron maturase 2 family. MatK subfamily.

The protein localises to the plastid. It is found in the chloroplast. Its function is as follows. Usually encoded in the trnK tRNA gene intron. Probably assists in splicing its own and other chloroplast group II introns. This Portulaca oleracea (Common purslane) protein is Maturase K.